Consider the following 1872-residue polypeptide: Ral GTPase-activating protein subunit alpha-2 (1872 aa).

Serine 373, serine 376, and serine 379 each carry phosphoserine. Basic and acidic residues predominate over residues aspartate 446–serine 469. Residues aspartate 446–tryptophan 481 form a disordered region. Phosphoserine occurs at positions 486 and 696. Disordered stretches follow at residues phenylalanine 711 to arginine 730 and glutamine 758 to aspartate 849. Threonine 715 is subject to Phosphothreonine; by PKB. Residues serine 775 to lysine 795 are compositionally biased toward polar residues. Residues serine 796–glycine 810 are compositionally biased toward basic and acidic residues. Serine 819 and serine 820 each carry phosphoserine. Residues leucine 824 to serine 843 show a composition bias toward basic and acidic residues. Serine 1592 carries the phosphoserine modification. The 209-residue stretch at leucine 1634–isoleucine 1842 folds into the Rap-GAP domain.

In terms of assembly, component of the heterodimeric RalGAP2 complex with RALGAPB. Heterodimerization is required for activity. As to expression, highly expressed in lung, liver, testis and thymus with lower levels in brain and heart (at protein level).

The protein localises to the cytoplasm. Catalytic subunit of the heterodimeric RalGAP2 complex which acts as a GTPase activator for the Ras-like small GTPases RALA and RALB. In Rattus norvegicus (Rat), this protein is Ral GTPase-activating protein subunit alpha-2.